A 382-amino-acid chain; its full sequence is MAAQRPLTIALVAGETSGDILGAGLIRALKARVPNARFVGVAGPRMQAEGCEAWYEMEELAVMGIVEVLGRLRRLLHIRADLTRRFTELKPDVFVGIDAPDFNITLEGNLKKKGIKTIHYVSPSVWAWRQKRVFKIGRSTHMVLAFLPFEKAFYDKFNVPCRFIGHTMADAMPLDPDKNAARDVLGIPHDAHCLALLPGSRGAEVEMLSADFLKTAQLLRQRYPDLEVVVPLVNAKRREQFEKIKAEVAPDLAVHLLDGMAREAMIASDAALLASGTAALECMLAKCPMVVGYRMKPFTFWLAKRLVKTEYVSLPNLLAGRELVKELLQEECEPQKLAEALLPLLANGKTSHAMHDTFRELHQQIRCNADEQAADAVLELAQ.

It belongs to the LpxB family.

The catalysed reaction is 2-N,3-O-bis[(3R)-3-hydroxytetradecanoyl]-alpha-D-glucosaminyl 1-phosphate + UDP-2-N,3-O-bis[(3R)-3-hydroxytetradecanoyl]-alpha-D-glucosamine = lipid A disaccharide (E. coli) + UDP + H(+). It carries out the reaction a lipid X + a UDP-2-N,3-O-bis[(3R)-3-hydroxyacyl]-alpha-D-glucosamine = a lipid A disaccharide + UDP + H(+). It functions in the pathway glycolipid biosynthesis; lipid IV(A) biosynthesis; lipid IV(A) from (3R)-3-hydroxytetradecanoyl-[acyl-carrier-protein] and UDP-N-acetyl-alpha-D-glucosamine: step 5/6. Functionally, condensation of UDP-2,3-diacylglucosamine and 2,3-diacylglucosamine-1-phosphate to form lipid A disaccharide, a precursor of lipid A, a phosphorylated glycolipid that anchors the lipopolysaccharide to the outer membrane of the cell. The sequence is that of Lipid-A-disaccharide synthase from Salmonella typhimurium (strain LT2 / SGSC1412 / ATCC 700720).